The primary structure comprises 165 residues: uncharacterized protein (165 aa).

Polar residues predominate over residues 22-34 (QQANQENMSSRTD). The segment at 22-45 (QQANQENMSSRTDSPIPPFGESEQ) is disordered.

This is an uncharacterized protein from Homo sapiens (Human).